The following is a 147-amino-acid chain: MFYQLRVAREKDGDVLEAFLKQAKTSYEGVKEGFTQFLMLEDSEKNIAGCLGIEKISCDQGLLRSLVISDKLHQGHIVTLFQSMEVLCEKHQIKTVYLVANQHSSADFLTAMGFERAESVPEELFSSDHFCESRQTEGAVLMKKASG.

This is an uncharacterized protein from Bacillus subtilis (strain 168).